The sequence spans 70 residues: Large ribosomal subunit protein bL31 (70 aa).

Positions 16, 18, 37, and 40 each coordinate Zn(2+).

The protein belongs to the bacterial ribosomal protein bL31 family. Type A subfamily. Part of the 50S ribosomal subunit. Requires Zn(2+) as cofactor.

Binds the 23S rRNA. The chain is Large ribosomal subunit protein bL31 from Saccharophagus degradans (strain 2-40 / ATCC 43961 / DSM 17024).